The following is a 548-amino-acid chain: Membrane-associated tyrosine- and threonine-specific cdc2-inhibitory kinase (548 aa).

Residues 61–89 (PNKQRSWSQPRPQSVSFRSPQNKTPASKL) are disordered. Positions 63-85 (KQRSWSQPRPQSVSFRSPQNKTP) are enriched in polar residues. Residues 103-353 (FKSICKLGRG…VDWLLSLPAI (251 aa)) enclose the Protein kinase domain. Residues 109–117 (LGRGSFGEV) and Lys-132 each bind ATP. Asp-226 functions as the Proton acceptor in the catalytic mechanism. Mg(2+)-binding residues include Asn-231, Asp-244, and Gly-246. Residues 376 to 392 (VYQFIVWLLSFVFQWLN) carry the Membrane-association motif motif. Residues 464–523 (SPDLLSRPSLGSTSTPRNLSPEFSMRKRSALPLTPNVSRISQDSTGKSRSPSTSHSSSGF) are disordered. Residues 472-481 (SLGSTSTPRN) show a composition bias toward polar residues. Thr-478 bears the Phosphothreonine; by CDK1 mark. Residues 507-521 (STGKSRSPSTSHSSS) are compositionally biased toward low complexity.

Belongs to the protein kinase superfamily. Ser/Thr protein kinase family. WEE1 subfamily. As to quaternary structure, interacts with CDC2-CCNB1 complex. Interacts with Mos during oocyte maturation. In terms of processing, autophosphorylated. Phosphorylated on undefined residues by RSK2 and Mos kinases. Phosphorylation at Thr-478 by cdk1 creates a docking site for plk1/plx1, leading to subsequent phosphorylation by plk1/plk1 and inhibition of the protein kinase activity kinase activity.

Its subcellular location is the endoplasmic reticulum membrane. It is found in the golgi apparatus membrane. The catalysed reaction is L-seryl-[protein] + ATP = O-phospho-L-seryl-[protein] + ADP + H(+). It catalyses the reaction L-threonyl-[protein] + ATP = O-phospho-L-threonyl-[protein] + ADP + H(+). Negatively regulated by hyperphosphorylation during mitosis. The plk1/plk1 protein kinase may be required for mitotic phosphorylation. Inactivated during oocyte maturation by phosphorylation by RSK2 and Mos kinase. Its function is as follows. Acts as a negative regulator of entry into mitosis (G2 to M transition) by phosphorylation of the CDK1 kinase specifically when CDK1 is complexed to cyclins. Mediates phosphorylation of CDK1 predominantly on 'Thr-14'. Also involved in Golgi fragmentation. May be involved in phosphorylation of CDK1 on 'Tyr-15' to a lesser degree, however tyrosine kinase activity is unclear and may be indirect. This Xenopus laevis (African clawed frog) protein is Membrane-associated tyrosine- and threonine-specific cdc2-inhibitory kinase (pkmyt1).